The chain runs to 261 residues: (S)-ureidoglycine aminohydrolase (261 aa).

The 47-residue stretch at 184-230 folds into the Cupin type-2 domain; it reads LSFAPGASHGYIETHVQEHGAYILSGQGVYNLDNNWIPVKKGDYIFM. Residues Glu196, His198, His202, and Gln236 each contribute to the Mn(2+) site. Glu196 serves as a coordination point for substrate. Gln236, Tyr249, and Lys253 together coordinate substrate.

This sequence belongs to the UGHY family. In terms of assembly, monomer. Mn(2+) is required as a cofactor.

It localises to the cytoplasm. The enzyme catalyses (S)-2-ureidoglycine + H2O = (S)-ureidoglycolate + NH4(+). Functionally, involved in the anaerobic nitrogen utilization via the assimilation of allantoin. Catalyzes the second stereospecific hydrolysis reaction (deamination) of the allantoin degradation pathway, producing S-ureidoglycolate and ammonia from S-ureidoglycine. The sequence is that of (S)-ureidoglycine aminohydrolase (allE) from Escherichia coli (strain K12).